Reading from the N-terminus, the 373-residue chain is Cytoplasmic tRNA 2-thiolation protein 1 (373 aa).

Belongs to the TtcA family. CTU1/NCS6/ATPBD3 subfamily.

It is found in the cytoplasm. It functions in the pathway tRNA modification; 5-methoxycarbonylmethyl-2-thiouridine-tRNA biosynthesis. Its function is as follows. Plays a central role in 2-thiolation of mcm(5)S(2)U at tRNA wobble positions of tRNA(Lys), tRNA(Glu) and tRNA(Gln). Directly binds tRNAs and probably acts by catalyzing adenylation of tRNAs, an intermediate required for 2-thiolation. It is unclear whether it acts as a sulfurtransferase that transfers sulfur from thiocarboxylated URM1 onto the uridine of tRNAs at wobble position. Prior mcm(5) tRNA modification by the elongator complex is required for 2-thiolation. May also be involved in protein urmylation. This chain is Cytoplasmic tRNA 2-thiolation protein 1, found in Eremothecium gossypii (strain ATCC 10895 / CBS 109.51 / FGSC 9923 / NRRL Y-1056) (Yeast).